Consider the following 218-residue polypeptide: Pyridoxine/pyridoxamine 5'-phosphate oxidase (218 aa).

Substrate contacts are provided by residues 14-17 and lysine 72; that span reads RREY. Residues 67–72, 82–83, arginine 88, lysine 89, and glutamine 111 each bind FMN; these read RIVLLK and YT. The substrate site is built by tyrosine 129, arginine 133, and serine 137. FMN contacts are provided by residues 146–147 and tryptophan 191; that span reads QS. 197 to 199 provides a ligand contact to substrate; sequence RLH. Arginine 201 is a binding site for FMN.

The protein belongs to the pyridoxamine 5'-phosphate oxidase family. Homodimer. Requires FMN as cofactor.

It carries out the reaction pyridoxamine 5'-phosphate + O2 + H2O = pyridoxal 5'-phosphate + H2O2 + NH4(+). It catalyses the reaction pyridoxine 5'-phosphate + O2 = pyridoxal 5'-phosphate + H2O2. Its pathway is cofactor metabolism; pyridoxal 5'-phosphate salvage; pyridoxal 5'-phosphate from pyridoxamine 5'-phosphate: step 1/1. It participates in cofactor metabolism; pyridoxal 5'-phosphate salvage; pyridoxal 5'-phosphate from pyridoxine 5'-phosphate: step 1/1. In terms of biological role, catalyzes the oxidation of either pyridoxine 5'-phosphate (PNP) or pyridoxamine 5'-phosphate (PMP) into pyridoxal 5'-phosphate (PLP). This is Pyridoxine/pyridoxamine 5'-phosphate oxidase from Klebsiella pneumoniae subsp. pneumoniae (strain ATCC 700721 / MGH 78578).